Consider the following 1021-residue polypeptide: Collagenase ColH (1021 aa).

A signal peptide spans 1-30 (MKRKCLSKRLMLAITMATIFTVNSTLPIYA). The propeptide occupies 31–40 (AVDKNNATAA). The tract at residues 41–320 (VQNESKRYTV…SADQIKRHYD (280 aa)) is activator domain. Residues 41–717 (VQNESKRYTV…TYDVVFHGYL (677 aa)) form an S1 metalloprotease domain region. Residues 330–601 (PLDKFKKEGK…MQERIDNYEN (272 aa)) are catalytic subdomain. Zn(2+) is bound at residue aspartate 421. Glutamate 430 lines the Ca(2+) pocket. Residue histidine 455 participates in Zn(2+) binding. Glutamate 456 is a catalytic residue. Position 459 (histidine 459) interacts with Zn(2+). Residues glycine 463, valine 467, and glycine 469 each coordinate Ca(2+). Glutamate 487 contributes to the Zn(2+) binding site. The interval 609-721 (DDYLVRHAYK…VFHGYLPNEG (113 aa)) is helper subdomain. The tract at residues 718–810 (PNEGDSKNSL…VSTTTAEIKD (93 aa)) is S2a domain. Residues asparagine 725, serine 726, aspartate 753, aspartate 755, aspartate 794, asparagine 814, lysine 815, aspartate 842, aspartate 844, aspartate 884, glutamate 908, glutamate 910, asparagine 912, asparagine 913, threonine 931, aspartate 937, glutamine 938, and aspartate 939 each coordinate Ca(2+). Residues 727–808 (LPYGKINGTY…SSVSTTTAEI (82 aa)) enclose the PKD 1 domain. The interval 811-904 (LSENKLPVIY…KIKITDPVYP (94 aa)) is S2b domain. The region spanning 816-905 (LPVIYMHVPK…IKITDPVYPI (90 aa)) is the PKD 2 domain. The segment at 903–922 (YPIGTEKEPNNSKETASGPI) is disordered. The interval 905–1021 (IGTEKEPNNS…RINIEGSVGR (117 aa)) is S3 collagen-binding domain. Residues 1002-1004 (YMF) are collagen-binding.

The protein belongs to the peptidase M9B family. Collagenase subfamily. Ca(2+) serves as cofactor. Zn(2+) is required as a cofactor. Upon purification gives rise to 98 kDa, 105 kDa and 116 kDa (full-length) proteins, all of which have the same N-terminus.

The protein localises to the secreted. It carries out the reaction Digestion of native collagen in the triple helical region at Xaa-|-Gly bonds. With synthetic peptides, a preference is shown for Gly at P3 and P1', Pro and Ala at P2 and P2', and hydroxyproline, Ala or Arg at P3'.. Its activity is regulated as follows. Inhibited by EDTA. Inhibited by 1-10-phenanthroline. Inhibited by broad-spectrum zinc metalloprotease inhibitor batimastat. N-aryl mercaptoacetamide-based inhibitors have been isolated that act on clostridial collagenases with submicromolar affinity while having negligibile activity on human collagenases. Functionally, clostridial collagenases are among the most efficient degraders of eukaryotic collagen known; saprophytes use collagen as a carbon source while pathogens additionally digest collagen to aid in host colonization. Has both tripeptidylcarboxypeptidase on Gly-X-Y and endopeptidase activities; the endopeptidase cuts within the triple helix region of collagen while tripeptidylcarboxypeptidase successively digests the exposed ends, thus clostridial collagenases can digest large sections of collagen. The full-length protein has collagenase activity, while both the 116 kDa and 98 kDa forms act on gelatin. In vitro digestion of soluble calf skin collagen fibrils requires both ColG and ColH; ColG forms missing the second collagen-binding domain is also synergistic with ColH, although their overall efficiency is decreased. Digestion of collagen requires Ca(2+) and is inhibited by EDTA. The activator domain (residues 119-388) and catalytic subdomain (330-601) open and close around substrate allowing digestion when the protein is closed. The chain is Collagenase ColH from Hathewaya histolytica (Clostridium histolyticum).